Here is a 330-residue protein sequence, read N- to C-terminus: Malate dehydrogenase (330 aa).

Gly13–Gly19 contacts NAD(+). Substrate is bound by residues Arg94 and Arg100. Residues Asn107, Gln114, and Val131 to Asn133 each bind NAD(+). Residues Asn133 and Arg164 each contribute to the substrate site. His189 serves as the catalytic Proton acceptor.

This sequence belongs to the LDH/MDH superfamily. MDH type 2 family.

The enzyme catalyses (S)-malate + NAD(+) = oxaloacetate + NADH + H(+). Catalyzes the reversible oxidation of malate to oxaloacetate. This is Malate dehydrogenase from Deinococcus deserti (strain DSM 17065 / CIP 109153 / LMG 22923 / VCD115).